A 488-amino-acid chain; its full sequence is Mannosylglycerate hydrolase MGH2 (488 aa).

Substrate-binding positions include Y94, 98 to 101 (WNWD), Y146, Q167, and G227. Catalysis depends on D229, which acts as the Proton donor. Residues R262 and 415-416 (YW) contribute to the substrate site. E459 serves as the catalytic Proton acceptor.

It belongs to the glycosyl hydrolase 63 family.

It carries out the reaction (2R)-2-O-(alpha-D-mannosyl)-glycerate + H2O = D-mannose + (R)-glycerate. The catalysed reaction is (2R)-2-O-(alpha-D-glucopyranosyl)-glycerate + H2O = (R)-glycerate + D-glucose. With respect to regulation, activity is not dependent on divalent cations, but it is enhanced by Mn(2+). In terms of biological role, catalyzes the hydrolysis of alpha-D-mannosyl-glycerate (MG) to D-glycerate and D-mannose. Can also hydrolyze alpha-D-glucopyranosyl-glycerate (GG)with lower efficiency. In Selaginella moellendorffii (Spikemoss), this protein is Mannosylglycerate hydrolase MGH2.